The chain runs to 104 residues: MRTYETVTILKPQLSDNEVAEFLNSAKEFITKAGGEIVSEEKLGRRRFTHEIDHVRDGFYVYLKFRALPAFVKSWDEMAKLNEQILRSIVMLSIEIKAKAQTVK.

Belongs to the bacterial ribosomal protein bS6 family.

Its function is as follows. Binds together with bS18 to 16S ribosomal RNA. The polypeptide is Small ribosomal subunit protein bS6 (Elusimicrobium minutum (strain Pei191)).